We begin with the raw amino-acid sequence, 527 residues long: MSLQMVTVSNNIALIQPGFSLMNFDGQVFFFGQKGWPKRSCPTGVFHLDVKHNHVKLKPTIFSKDSCYLPPLRYPATCTFKGSLESEKHQYIIHGGKTPNNEVSDKIYVMSIVCKNNKKVTFRCTEKDLVGDVPEARYGHSINVVYSRGKSMGVLFGGRSYMPSTHRTTEKWNSVADCLPCVFLVDFEFGCATSYILPELQDGLSFHVSIAKNDTIYILGGHSLANNIRPANLYRIRVDLPLGSPAVNCTVLPGGISVSSAILTQTNNDEFVIVGGYQLENQKRMICNIISLEDNKIEIREMETPDWTPDIKHSKIWFGSNMGNGTVFLGIPGDNKQVVSEGFYFYMLKCAEDDTNEEQTTFTNSQTSTEDPGDSTPFEDSEEFCFSAEANSFDGDDEFDTYNEDDEEDESETGYWITCCPTCDVDINTWVPFYSTELNKPAMIYCSHGDGHWVHAQCMDLAERTLIHLSAGSNKYYCNEHVEIARALHTPQRVLPLKKPPMKSLRKKGSGKILTPAKKSFLRRLFD.

The segment at 357-380 (EEQTTFTNSQTSTEDPGDSTPFED) is disordered. Residues 358-370 (EQTTFTNSQTSTE) are compositionally biased toward polar residues. The span at 371–380 (DPGDSTPFED) shows a compositional bias: acidic residues. The segment at 416 to 484 (WITCCPTCDV…KYYCNEHVEI (69 aa)) adopts a PHD-type; atypical zinc-finger fold. Residues Cys-419, Cys-423, Cys-446, His-452, His-455, Cys-458, Cys-478, and His-481 each contribute to the Zn(2+) site.

It belongs to the RAG2 family. Component of the RAG complex composed of core components RAG1 and RAG2, and associated component HMGB1 or HMGB2. As to expression, cells of the B- and T-lymphocyte lineages.

The protein resides in the nucleus. In terms of biological role, core component of the RAG complex, a multiprotein complex that mediates the DNA cleavage phase during V(D)J recombination. V(D)J recombination assembles a diverse repertoire of immunoglobulin and T-cell receptor genes in developing B and T-lymphocytes through rearrangement of different V (variable), in some cases D (diversity), and J (joining) gene segments. DNA cleavage by the RAG complex occurs in 2 steps: a first nick is introduced in the top strand immediately upstream of the heptamer, generating a 3'-hydroxyl group that can attack the phosphodiester bond on the opposite strand in a direct transesterification reaction, thereby creating 4 DNA ends: 2 hairpin coding ends and 2 blunt, 5'-phosphorylated ends. The chromatin structure plays an essential role in the V(D)J recombination reactions and the presence of histone H3 trimethylated at 'Lys-4' (H3K4me3) stimulates both the nicking and haipinning steps. The RAG complex also plays a role in pre-B cell allelic exclusion, a process leading to expression of a single immunoglobulin heavy chain allele to enforce clonality and monospecific recognition by the B-cell antigen receptor (BCR) expressed on individual B-lymphocytes. The introduction of DNA breaks by the RAG complex on one immunoglobulin allele induces ATM-dependent repositioning of the other allele to pericentromeric heterochromatin, preventing accessibility to the RAG complex and recombination of the second allele. In the RAG complex, RAG2 is not the catalytic component but is required for all known catalytic activities mediated by RAG1. It probably acts as a sensor of chromatin state that recruits the RAG complex to H3K4me3. In Homo sapiens (Human), this protein is V(D)J recombination-activating protein 2 (RAG2).